The sequence spans 176 residues: MAENSDITSLEDSFRKFAIYGDTKATGQEMTGKNWSKLCKDCKVNDGKAVTGTDVDIVFSKVKAKSARVITYEEFTKALEELSAKRFKGKSKEEAYEAICKLVAGKEPVSAGITKAAATGAVDRLTDTSKYTGSHKERFDQTGKGKGKSGRETIVENTGYVGSYKLAGTYDAKVKK.

Residues 132-151 (TGSHKERFDQTGKGKGKSGR) form a disordered region. Positions 134-151 (SHKERFDQTGKGKGKSGR) are enriched in basic and acidic residues.

The protein belongs to the TPPP family.

It is found in the cytoplasm. It localises to the cytoskeleton. Functionally, regulator of microtubule dynamic that has microtubule bundling activity. In Xenopus laevis (African clawed frog), this protein is Tubulin polymerization-promoting protein family member 3 (tppp3).